The primary structure comprises 72 residues: Protein CYSTEINE-RICH TRANSMEMBRANE MODULE 1 (72 aa).

Residues 1-11 (MSQYDHNQSAG) show a composition bias toward polar residues. The interval 1 to 46 (MSQYDHNQSAGANPPPPMSTCTSPPPPIGYPTNQPSHGSVAQGKVE) is disordered. The span at 13–29 (NPPPPMSTCTSPPPPIG) shows a compositional bias: pro residues. Residues 49–65 (SKGDGFFKGCLAAMCCC) traverse the membrane as a helical segment.

The protein belongs to the CYSTM1 family. In terms of assembly, heterodimers. Binds weakly to CYSTM7 and WIH1/CYSTM13. Mostly expressed in roots, flowers and siliques and, to a lower extent, in stems and leaves.

The protein localises to the cell membrane. It localises to the nucleus. In terms of biological role, may be involved in aluminium (Al) tolerance. Involved in resistance to abiotic stress. This Arabidopsis thaliana (Mouse-ear cress) protein is Protein CYSTEINE-RICH TRANSMEMBRANE MODULE 1.